The following is a 628-amino-acid chain: Glutamine--fructose-6-phosphate aminotransferase [isomerizing] (628 aa).

Residue Cys2 is the Nucleophile; for GATase activity of the active site. In terms of domain architecture, Glutamine amidotransferase type-2 spans 2–229 (CGIVGYVGHR…QDQAVVLTAD (228 aa)). The disordered stretch occupies residues 61 to 94 (ETDSNDGDGLGGSTGLGHTRWATHGRPTDRNAHP). 2 consecutive SIS domains span residues 301–440 (SDQE…ARGT) and 473–618 (LAER…VDKP). The active-site For Fru-6P isomerization activity is Lys623.

Homodimer.

The protein resides in the cytoplasm. It carries out the reaction D-fructose 6-phosphate + L-glutamine = D-glucosamine 6-phosphate + L-glutamate. In terms of biological role, catalyzes the first step in hexosamine metabolism, converting fructose-6P into glucosamine-6P using glutamine as a nitrogen source. In Mycolicibacterium smegmatis (strain ATCC 700084 / mc(2)155) (Mycobacterium smegmatis), this protein is Glutamine--fructose-6-phosphate aminotransferase [isomerizing].